Consider the following 269-residue polypeptide: Meiotically up-regulated gene 43 protein (269 aa).

The protein localises to the mitochondrion. Has a role in meiosis. This is Meiotically up-regulated gene 43 protein (mug43) from Schizosaccharomyces pombe (strain 972 / ATCC 24843) (Fission yeast).